A 398-amino-acid chain; its full sequence is Putative isocitrate lyase subunit B (398 aa).

It belongs to the isocitrate lyase/PEP mutase superfamily. Isocitrate lyase family. Mg(2+) is required as a cofactor.

It catalyses the reaction D-threo-isocitrate = glyoxylate + succinate. Functionally, together with AceAa, they could catalyze the formation of succinate and glyoxylate from isocitrate. This chain is Putative isocitrate lyase subunit B (aceAb), found in Mycobacterium tuberculosis (strain ATCC 25618 / H37Rv).